Reading from the N-terminus, the 184-residue chain is Large ribosomal subunit protein uL6 (184 aa).

The protein belongs to the universal ribosomal protein uL6 family. In terms of assembly, part of the 50S ribosomal subunit.

In terms of biological role, this protein binds to the 23S rRNA, and is important in its secondary structure. It is located near the subunit interface in the base of the L7/L12 stalk, and near the tRNA binding site of the peptidyltransferase center. This is Large ribosomal subunit protein uL6 from Mycoplasma pneumoniae (strain ATCC 29342 / M129 / Subtype 1) (Mycoplasmoides pneumoniae).